The sequence spans 355 residues: Peptide chain release factor 1 (355 aa).

The residue at position 231 (Gln-231) is an N5-methylglutamine. The span at 281–291 (ERLAKESEARK) shows a compositional bias: basic and acidic residues. The disordered stretch occupies residues 281–302 (ERLAKESEARKSQVGSGDRSER).

The protein belongs to the prokaryotic/mitochondrial release factor family. Methylated by PrmC. Methylation increases the termination efficiency of RF1.

Its subcellular location is the cytoplasm. Functionally, peptide chain release factor 1 directs the termination of translation in response to the peptide chain termination codons UAG and UAA. This chain is Peptide chain release factor 1, found in Campylobacter jejuni subsp. doylei (strain ATCC BAA-1458 / RM4099 / 269.97).